The sequence spans 368 residues: 1-aminocyclopropane-1-carboxylate synthase (368 aa).

K230 carries the N6-(pyridoxal phosphate)lysine modification.

Belongs to the class-I pyridoxal-phosphate-dependent aminotransferase family. Homodimer. Requires pyridoxal 5'-phosphate as cofactor.

It carries out the reaction S-adenosyl-L-methionine = 1-aminocyclopropane-1-carboxylate + S-methyl-5'-thioadenosine + H(+). The protein operates within alkene biosynthesis; ethylene biosynthesis via S-adenosyl-L-methionine; ethylene from S-adenosyl-L-methionine: step 1/2. In terms of biological role, catalyzes the formation of 1-aminocyclopropane-1-carboxylate, a direct precursor of ethylene in higher plants. The sequence is that of 1-aminocyclopropane-1-carboxylate synthase (ACS5) from Vigna radiata var. radiata (Mung bean).